A 505-amino-acid chain; its full sequence is Facilitated trehalose transporter Tret1 (505 aa).

The Cytoplasmic segment spans residues 1–46; the sequence is MEMEIKDENLRNSVPFVRQLSTDSVKTKTEYDNEDGTPYKSTTQKL. Residues 47-67 traverse the membrane as a helical segment; that stretch reads FLWTQLLAAFAVSVGSMNVGF. Residues 68 to 91 lie on the Extracellular side of the membrane; it reads SSGYTSPAVLTMNITLDITKEEIT. An N-linked (GlcNAc...) asparagine glycan is attached at Asn-80. A helical membrane pass occupies residues 92–112; that stretch reads WVGGLMPLAALVGGIVGGPLI. The Cytoplasmic segment spans residues 113 to 124; the sequence is EYLGRKKTIMGT. A helical membrane pass occupies residues 125 to 145; the sequence is AVPFTIGWMLIANAINVVMVF. Topologically, residues 146-149 are extracellular; sequence AGRV. A helical membrane pass occupies residues 150–170; that stretch reads ICGVCVGIVSLAFPVYIGETI. The Cytoplasmic portion of the chain corresponds to 171 to 175; it reads QPEVR. A helical transmembrane segment spans residues 176–196; the sequence is GALGLLPTAFGNTGILLAFLV. At 197–201 the chain is on the extracellular side; that stretch reads GSYLD. Residues 202–222 traverse the membrane as a helical segment; it reads WSNLAFFGAAIPVPFFLLMIL. Topologically, residues 223–286 are cytoplasmic; it reads TPETPRWYVS…QLFSKRYLPA (64 aa). A helical transmembrane segment spans residues 287–307; sequence VMISLGLMLFQQLTGINAVIF. At 308-323 the chain is on the extracellular side; sequence YAASIFQMSGSSVDEN. The helical transmembrane segment at 324 to 344 threads the bilayer; it reads LASIIIGVVNFISTFIATMLI. Topologically, residues 345-350 are cytoplasmic; that stretch reads DRLGRK. Residues 351 to 371 form a helical membrane-spanning segment; that stretch reads VLLYISSVAMITTLLALGAYF. Residues 372–390 are Extracellular-facing; it reads YLKQNHIDVTAYGWLPLAC. A helical membrane pass occupies residues 391-411; the sequence is LVIYVLGFSIGFGPIPWLMLG. Over 412–419 the chain is Cytoplasmic; that stretch reads EILPSKIR. A helical membrane pass occupies residues 420-437; it reads GTAASLATGFNWTCTFIV. At 438-451 the chain is on the extracellular side; the sequence is TKTFQNIIDAIYMH. A helical transmembrane segment spans residues 452–472; that stretch reads GTLWLFAVICIGGLLFVIFFV. Over 473–505 the chain is Cytoplasmic; it reads PETKGKSLEEIEMKLTSGSRRVRNISKQPENIC.

It belongs to the major facilitator superfamily. Sugar transporter (TC 2.A.1.1) family. Trehalose transporter subfamily. As to expression, expressed in many larval tissues at a low level, moderate levels of expression are seen in testis and head and highest expression in muscle.

It is found in the cell membrane. Its function is as follows. High-capacity facilitative transporter for trehalose. Does not transport maltose, sucrose or lactose. Mediates the bidirectional transfer of trehalose. Responsible for the transport of trehalose synthesized in the fat body and the incorporation of trehalose into other tissues that require a carbon source, thereby regulating trehalose levels in the hemolymph. This Bombyx mori (Silk moth) protein is Facilitated trehalose transporter Tret1.